Reading from the N-terminus, the 102-residue chain is NADH-quinone oxidoreductase subunit K (102 aa).

3 consecutive transmembrane segments (helical) span residues 6–26, 30–50, and 63–83; these read LIAMMILAAGLFAIGLFGVLA, IMFQLVALEVALSGPALGFVA, and MFILVLTLAAAEVAVGLALFL.

Belongs to the complex I subunit 4L family. As to quaternary structure, NDH-1 is composed of 14 different subunits. Subunits NuoA, H, J, K, L, M, N constitute the membrane sector of the complex.

It localises to the cell inner membrane. It carries out the reaction a quinone + NADH + 5 H(+)(in) = a quinol + NAD(+) + 4 H(+)(out). Its function is as follows. NDH-1 shuttles electrons from NADH, via FMN and iron-sulfur (Fe-S) centers, to quinones in the respiratory chain. The immediate electron acceptor for the enzyme in this species is believed to be ubiquinone. Couples the redox reaction to proton translocation (for every two electrons transferred, four hydrogen ions are translocated across the cytoplasmic membrane), and thus conserves the redox energy in a proton gradient. The polypeptide is NADH-quinone oxidoreductase subunit K (Rhodopseudomonas palustris (strain BisB5)).